The chain runs to 133 residues: Profilin-4 (133 aa).

A disulfide bond links cysteine 13 and cysteine 117. The Involved in PIP2 interaction motif lies at 83 to 99 (AVIRGKKGSGGITIKKT). At threonine 113 the chain carries Phosphothreonine.

It belongs to the profilin family. As to quaternary structure, occurs in many kinds of cells as a complex with monomeric actin in a 1:1 ratio. Phosphorylated by MAP kinases.

Its subcellular location is the cytoplasm. The protein resides in the cytoskeleton. Functionally, binds to actin and affects the structure of the cytoskeleton. At high concentrations, profilin prevents the polymerization of actin, whereas it enhances it at low concentrations. The polypeptide is Profilin-4 (Corylus avellana (European hazel)).